The sequence spans 137 residues: uncharacterized protein (137 aa).

Positions 1–34 (MAALSRALGPLRTPAPPLWIGLFLVATGSQQSLA) are cleaved as a signal peptide. Over residues 33–45 (LAQPLPGNTTEAT) the composition is skewed to polar residues. Disordered regions lie at residues 33-54 (LAQP…ASGS) and 98-137 (VLSP…LGAS). A glycan (N-linked (GlcNAc...) asparagine) is linked at Asn40. Residues 121–137 (KLKEPQPQDHKPGLGAS) show a composition bias toward basic and acidic residues.

The protein localises to the secreted. This is an uncharacterized protein from Homo sapiens (Human).